A 242-amino-acid chain; its full sequence is Protein CDV3 homolog B (242 aa).

Residues 1–15 show a composition bias toward basic and acidic residues; that stretch reads MAEPEERSLDDFFAK. The segment at 1 to 242 is disordered; it reads MAEPEERSLD…DNQYAVLGEQ (242 aa). A2 carries the post-translational modification N-acetylalanine. The segment covering 30–57 has biased composition (low complexity); sequence AAGSRGPARPSDGATSSSLSSYVSAAGK. Positions 59–75 are enriched in basic and acidic residues; the sequence is VKKEKSGKSENPDQLQE. The span at 105-122 shows a compositional bias: acidic residues; it reads KEDDENENKEEQGADWEE. 2 stretches are compositionally biased toward polar residues: residues 129-143 and 183-194; these read DKSS…QAQA and SDTQFPSPQATA. Positions 195–213 are enriched in basic and acidic residues; it reads KHTESRREKEMEKTFEIVK.

It belongs to the CDV3 family.

The protein resides in the cytoplasm. This chain is Protein CDV3 homolog B (cdv3-b), found in Xenopus laevis (African clawed frog).